A 66-amino-acid polypeptide reads, in one-letter code: Large ribosomal subunit protein bL35 (66 aa).

Over residues 1–28 (MPKMKTHRGSAKRFKRTGSGKLKRRHGF) the composition is skewed to basic residues. A disordered region spans residues 1–50 (MPKMKTHRGSAKRFKRTGSGKLKRRHGFTSHMFANKSQKQKRKLRKSAMV).

The protein belongs to the bacterial ribosomal protein bL35 family.

The protein is Large ribosomal subunit protein bL35 of Listeria monocytogenes serotype 4a (strain HCC23).